We begin with the raw amino-acid sequence, 147 residues long: MTSQPVLNAEQIMGLLPHRYPFALVDRVLEHVPGEKAVAIKNVTLNEPQFQGHFPDRPLMPGVLIVEAMAQVGGLIVTQMPDLPKGLFVFAGIDGVRFRRPVVPGDQLRISCELLSLKRQRFGKVKAEATVEGQLVCSGELMFSLVD.

His53 is a catalytic residue.

The protein belongs to the thioester dehydratase family. FabZ subfamily.

The protein localises to the cytoplasm. The catalysed reaction is a (3R)-hydroxyacyl-[ACP] = a (2E)-enoyl-[ACP] + H2O. In terms of biological role, involved in unsaturated fatty acids biosynthesis. Catalyzes the dehydration of short chain beta-hydroxyacyl-ACPs and long chain saturated and unsaturated beta-hydroxyacyl-ACPs. The protein is 3-hydroxyacyl-[acyl-carrier-protein] dehydratase FabZ of Synechococcus sp. (strain WH7803).